A 341-amino-acid chain; its full sequence is Cobalt-precorrin-5B C(1)-methyltransferase (341 aa).

The protein belongs to the CbiD family.

The catalysed reaction is Co-precorrin-5B + S-adenosyl-L-methionine = Co-precorrin-6A + S-adenosyl-L-homocysteine. Its pathway is cofactor biosynthesis; adenosylcobalamin biosynthesis; cob(II)yrinate a,c-diamide from sirohydrochlorin (anaerobic route): step 6/10. In terms of biological role, catalyzes the methylation of C-1 in cobalt-precorrin-5B to form cobalt-precorrin-6A. This is Cobalt-precorrin-5B C(1)-methyltransferase from Picrophilus torridus (strain ATCC 700027 / DSM 9790 / JCM 10055 / NBRC 100828 / KAW 2/3).